Here is a 139-residue protein sequence, read N- to C-terminus: MELSVAMCGLLCLLFSQAVPMCVPTDYTLYEERRECDFCVAINTTICMGFCYSRDSNMKELAGPRFLIQRGCTYDQVEYRTVILPGCPLHANPLFTYPVALSCHCGTCNTDSDECAHKASSGDGARCSKPLRHIYHTLA.

Residues 1-20 (MELSVAMCGLLCLLFSQAVP) form the signal peptide. Intrachain disulfides connect cysteine 22-cysteine 72, cysteine 36-cysteine 87, cysteine 39-cysteine 127, cysteine 47-cysteine 103, cysteine 51-cysteine 105, and cysteine 108-cysteine 115. An N-linked (GlcNAc...) asparagine glycan is attached at asparagine 43.

Belongs to the glycoprotein hormones subunit beta family. As to quaternary structure, heterodimer of a common alpha chain and a unique beta chain which confers biological specificity to thyrotropin, lutropin, follitropin and gonadotropin.

The protein resides in the secreted. Indispensable for the control of thyroid structure and metabolism. May play some role in the biological processes of the immature fishes. The protein is Thyrotropin subunit beta (tshb) of Salmo salar (Atlantic salmon).